A 173-amino-acid chain; its full sequence is Translation initiation factor IF-3 (173 aa).

Belongs to the IF-3 family. In terms of assembly, monomer.

It is found in the cytoplasm. IF-3 binds to the 30S ribosomal subunit and shifts the equilibrium between 70S ribosomes and their 50S and 30S subunits in favor of the free subunits, thus enhancing the availability of 30S subunits on which protein synthesis initiation begins. This Methylorubrum extorquens (strain CM4 / NCIMB 13688) (Methylobacterium extorquens) protein is Translation initiation factor IF-3.